The primary structure comprises 228 residues: Ribulose-phosphate 3-epimerase (228 aa).

Serine 9 serves as a coordination point for substrate. Residues histidine 34, aspartate 36, and histidine 70 each coordinate a divalent metal cation. Catalysis depends on aspartate 36, which acts as the Proton acceptor. Substrate contacts are provided by residues histidine 70, 146 to 149 (GFPG), 179 to 181 (DGG), and 201 to 202 (GS). A divalent metal cation is bound at residue aspartate 179. The active-site Proton donor is the aspartate 179.

The protein belongs to the ribulose-phosphate 3-epimerase family. It depends on a divalent metal cation as a cofactor.

It carries out the reaction D-ribulose 5-phosphate = D-xylulose 5-phosphate. It functions in the pathway carbohydrate degradation. In terms of biological role, catalyzes the reversible epimerization of D-ribulose 5-phosphate to D-xylulose 5-phosphate. This chain is Ribulose-phosphate 3-epimerase, found in Buchnera aphidicola subsp. Baizongia pistaciae (strain Bp).